The following is an 88-amino-acid chain: Sec-independent protein translocase protein TatA (88 aa).

The helical transmembrane segment at 1 to 21 threads the bilayer; that stretch reads MGSIGWAQLLIIAVIVVLLFG. The disordered stretch occupies residues 41 to 88; the sequence is KAMGDDSQTPPTNVDKTSNDADFAKSITEKQQPVAKAEESKSHEKEQG. Positions 46-56 are enriched in polar residues; it reads DSQTPPTNVDK. Residues 76-88 show a composition bias toward basic and acidic residues; it reads KAEESKSHEKEQG.

It belongs to the TatA/E family. As to quaternary structure, the Tat system comprises two distinct complexes: a TatABC complex, containing multiple copies of TatA, TatB and TatC subunits, and a separate TatA complex, containing only TatA subunits. Substrates initially bind to the TatABC complex, which probably triggers association of the separate TatA complex to form the active translocon.

Its subcellular location is the cell inner membrane. In terms of biological role, part of the twin-arginine translocation (Tat) system that transports large folded proteins containing a characteristic twin-arginine motif in their signal peptide across membranes. TatA could form the protein-conducting channel of the Tat system. The protein is Sec-independent protein translocase protein TatA of Yersinia pestis.